The chain runs to 600 residues: Elongation factor 4 (600 aa).

Residues 5–187 form the tr-type G domain; the sequence is KYIRNFSIIA…AIVSKLPPPK (183 aa). Residues 17 to 22 and 134 to 137 contribute to the GTP site; these read DHGKST and NKLD.

It belongs to the TRAFAC class translation factor GTPase superfamily. Classic translation factor GTPase family. LepA subfamily.

The protein resides in the cell inner membrane. It carries out the reaction GTP + H2O = GDP + phosphate + H(+). Functionally, required for accurate and efficient protein synthesis under certain stress conditions. May act as a fidelity factor of the translation reaction, by catalyzing a one-codon backward translocation of tRNAs on improperly translocated ribosomes. Back-translocation proceeds from a post-translocation (POST) complex to a pre-translocation (PRE) complex, thus giving elongation factor G a second chance to translocate the tRNAs correctly. Binds to ribosomes in a GTP-dependent manner. The polypeptide is Elongation factor 4 (Rickettsia rickettsii (strain Iowa)).